The primary structure comprises 117 residues: cAMP-regulated phosphoprotein 19-B (117 aa).

The segment covering 1-37 (MSRDNQEIKAPEESSAEEQKEMDDKVTSPEKAEEIKL) has biased composition (basic and acidic residues). A disordered region spans residues 1 to 54 (MSRDNQEIKAPEESSAEEQKEMDDKVTSPEKAEEIKLKSRYPNIGPKPGGSDFL). A Phosphoserine; by CDK2 modification is found at serine 28. Serine 67 carries the phosphoserine; by GWL modification. Positions 77–117 (MKNKQLPTAAPDKTEVTGDHIPTPQDLPQRKPSLVASKLAG) are disordered. Threonine 99 is subject to Phosphothreonine; by CDK2. Phosphoserine; by PKA is present on serine 109.

It belongs to the endosulfine family. As to quaternary structure, interacts (when phosphorylated at Ser-67) with ppp2r2d. Post-translationally, phosphorylation at Ser-67 by gwl during mitosis is essential for interaction with ppp2r2d (PR55-delta) and subsequent inactivation of PP2A.

The protein localises to the cytoplasm. In terms of biological role, protein phosphatase inhibitor that specifically inhibits protein phosphatase 2A (PP2A) during mitosis. When phosphorylated at Ser-67 during mitosis, specifically interacts with ppp2r2d (PR55-delta) and inhibits its activity, leading to inactivation of PP2A, an essential condition to keep cyclin-B1-CDK1 activity high during M phase. This is cAMP-regulated phosphoprotein 19-B (arpp19-b) from Xenopus laevis (African clawed frog).